Consider the following 117-residue polypeptide: DNA polymerase epsilon subunit 4 (117 aa).

The segment at 1-36 (MAAAAAAGSGTPREEEGPAGEAAASQPQAPTSVPGA) is disordered. Ala2 is modified (N-acetylalanine). A Phosphothreonine modification is found at Thr11. Low complexity predominate over residues 19–30 (AGEAAASQPQAP). The residue at position 25 (Ser25) is a Phosphoserine.

Component of the DNA polymerase epsilon complex consisting of four subunits: the catalytic subunit POLE and the accessory subunits POLE2, POLE3 and POLE4. Interaction with POLE3 is a prerequisite for further binding with POLE and POLE2.

The protein resides in the nucleus. In terms of biological role, accessory component of the DNA polymerase epsilon complex. Participates in DNA repair and in chromosomal DNA replication. This chain is DNA polymerase epsilon subunit 4 (POLE4), found in Homo sapiens (Human).